The chain runs to 369 residues: mRNA cap guanine-N(7) methyltransferase 1 (369 aa).

A disordered region spans residues 1 to 55 (MNKRPRDEPSSSFASAPKRQYGAGGGGYGGHGYSEERSSARRVADHYSARSNQTL). Residues 22 to 32 (GAGGGGYGGHG) show a composition bias toward gly residues. Basic and acidic residues predominate over residues 33-48 (YSEERSSARRVADHYS). The mRNA cap 0 methyltransferase domain maps to 61-340 (SPIIHLKKLN…LYLAFVLRKR (280 aa)). 70–71 (NN) serves as a coordination point for mRNA. S-adenosyl-L-methionine contacts are provided by residues Lys-74, Ala-92, Asp-114, 149-150 (DC), and 171-173 (QFA).

It belongs to the class I-like SAM-binding methyltransferase superfamily. mRNA cap 0 methyltransferase family.

It is found in the nucleus. It catalyses the reaction a 5'-end (5'-triphosphoguanosine)-ribonucleoside in mRNA + S-adenosyl-L-methionine = a 5'-end (N(7)-methyl 5'-triphosphoguanosine)-ribonucleoside in mRNA + S-adenosyl-L-homocysteine. In terms of biological role, mRNA-capping methyltransferase that methylates the N7 position of the added guanosine to the 5'-cap structure of mRNAs. Binds RNA containing 5'-terminal GpppC. In Oryza sativa subsp. japonica (Rice), this protein is mRNA cap guanine-N(7) methyltransferase 1.